Reading from the N-terminus, the 195-residue chain is Phosphoheptose isomerase (195 aa).

The SIS domain maps to 36-195 (VSKVLQSGNT…IVEYNLFKME (160 aa)). Residue 51 to 53 (NGG) coordinates substrate. His60 and Glu64 together coordinate Zn(2+). Substrate contacts are provided by residues Glu64, 95–96 (ND), 121–123 (STS), Ser126, and Gln173. Gln173 and His181 together coordinate Zn(2+).

This sequence belongs to the SIS family. GmhA subfamily. Zn(2+) is required as a cofactor.

The protein resides in the cytoplasm. The catalysed reaction is 2 D-sedoheptulose 7-phosphate = D-glycero-alpha-D-manno-heptose 7-phosphate + D-glycero-beta-D-manno-heptose 7-phosphate. It functions in the pathway carbohydrate biosynthesis; D-glycero-D-manno-heptose 7-phosphate biosynthesis; D-glycero-alpha-D-manno-heptose 7-phosphate and D-glycero-beta-D-manno-heptose 7-phosphate from sedoheptulose 7-phosphate: step 1/1. In terms of biological role, catalyzes the isomerization of sedoheptulose 7-phosphate in D-glycero-D-manno-heptose 7-phosphate. The polypeptide is Phosphoheptose isomerase (Leptospira borgpetersenii serovar Hardjo-bovis (strain JB197)).